A 210-amino-acid chain; its full sequence is MGVRAQQKEKTRRSLVEAAFSQLSAERSFASLSLREVAREAGIAPTSFYRHFRDVDELGLTMVDESGLMLRQLMRQARQRIAKGGSVIRTSVSTFMEFIGNNPNAFRLLLRERSGTSAAFRAAVAREIQHFIAELADYLELENHMPRAFTEAQAEAMVTIVFSAGAEALDVGAEQRRQLEERLVLQLRMIAKGAYYWYRREQEKIAHHSE.

The HTH tetR-type domain maps to 10 to 70 (KTRRSLVEAA…TMVDESGLML (61 aa)). Residues 33–52 (SLREVAREAGIAPTSFYRHF) constitute a DNA-binding region (H-T-H motif).

Homodimer.

Its subcellular location is the cytoplasm. Its function is as follows. Represses the transcription of fabB, involved in unsaturated fatty acid (UFA) biosynthesis. By controlling UFA production, FabR directly influences the physical properties of the membrane bilayer. This chain is HTH-type transcriptional repressor FabR, found in Salmonella arizonae (strain ATCC BAA-731 / CDC346-86 / RSK2980).